The following is a 130-amino-acid chain: Small ribosomal subunit protein uS8 (130 aa).

Belongs to the universal ribosomal protein uS8 family. In terms of assembly, part of the 30S ribosomal subunit.

Its function is as follows. One of the primary rRNA binding proteins, it binds directly to 16S rRNA central domain where it helps coordinate assembly of the platform of the 30S subunit. In Methanosphaera stadtmanae (strain ATCC 43021 / DSM 3091 / JCM 11832 / MCB-3), this protein is Small ribosomal subunit protein uS8.